The following is a 580-amino-acid chain: Cyclin-K (580 aa).

The segment at 262–580 (KQQMPHHTPH…GGLGRAAWMR (319 aa)) is disordered. Low complexity-rich tracts occupy residues 263–277 (QQMP…QQPP) and 285–321 (VPQV…QQPK). 4 positions are modified to phosphoserine: serine 324, serine 328, serine 329, and serine 340. A compositionally biased stretch (low complexity) spans 377 to 386 (PLAAALGEAE). Residues 400-426 (QIPPPAHPAPVHQPPPLPHRPPPPPPS) show a composition bias toward pro residues. Low complexity predominate over residues 427–444 (SYMTGMSTTSSYMSGEGY). Over residues 477 to 568 (VYPPNPPPPP…PPPIPPPGMP (92 aa)) the composition is skewed to pro residues.

Belongs to the cyclin family. Cyclin C subfamily. In terms of assembly, regulatory subunit of cyclin-dependent kinases. Identified in a complex with a kinase and the RNA polymerase II holoenzyme. Interacts with POLR2A. Interacts with CDK12 and CDK13. Interacts with CDK9 according to PubMed:10574912; does not interact with CDK9 according to PubMed:22012619. (Microbial infection) Interacts with human herpes virus 1 (HHV-1) transcriptional regulator ICP22. In terms of tissue distribution, widely expressed. Highest levels in testis.

The protein localises to the nucleus. Its function is as follows. Regulatory subunit of cyclin-dependent kinases that mediates activation of target kinases. Plays a role in transcriptional regulation via its role in regulating the phosphorylation of the C-terminal domain (CTD) of the large subunit of RNA polymerase II (POLR2A). This is Cyclin-K (CCNK) from Homo sapiens (Human).